The following is a 465-amino-acid chain: Flavin-containing monooxygenase FMO GS-OX-like 2 (465 aa).

Position 18-23 (18-23) interacts with FAD; that stretch reads GAGAAG. Residue 217–222 coordinates NADP(+); sequence GSSASG.

This sequence belongs to the FMO family. It depends on FAD as a cofactor.

Catalyzes the conversion of methylthioalkyl glucosinolates of any chain length into methylsulfinylalkyl glucosinolates. This is Flavin-containing monooxygenase FMO GS-OX-like 2 from Arabidopsis thaliana (Mouse-ear cress).